The chain runs to 414 residues: Putative competence-damage inducible protein (414 aa).

This sequence belongs to the CinA family.

In Listeria monocytogenes serotype 4a (strain HCC23), this protein is Putative competence-damage inducible protein.